The chain runs to 601 residues: Aspartate--tRNA(Asp/Asn) ligase (601 aa).

Glu173 contributes to the L-aspartate binding site. Positions 197 to 200 (QLFK) are aspartate. Residue Arg219 participates in L-aspartate binding. Residues 219-221 (RDE) and Gln228 contribute to the ATP site. Residue His456 coordinates L-aspartate. An ATP-binding site is contributed by Glu490. Position 497 (Arg497) interacts with L-aspartate. 542–545 (GWDR) contacts ATP. The interval 566-601 (GGGYDPLTQAPAPITAEQRRESGVDAVPDDETAPQA) is disordered. Acidic residues predominate over residues 592 to 601 (VPDDETAPQA).

This sequence belongs to the class-II aminoacyl-tRNA synthetase family. Type 1 subfamily. In terms of assembly, homodimer.

It is found in the cytoplasm. It catalyses the reaction tRNA(Asx) + L-aspartate + ATP = L-aspartyl-tRNA(Asx) + AMP + diphosphate. Functionally, aspartyl-tRNA synthetase with relaxed tRNA specificity since it is able to aspartylate not only its cognate tRNA(Asp) but also tRNA(Asn). Reaction proceeds in two steps: L-aspartate is first activated by ATP to form Asp-AMP and then transferred to the acceptor end of tRNA(Asp/Asn). This Beutenbergia cavernae (strain ATCC BAA-8 / DSM 12333 / CCUG 43141 / JCM 11478 / NBRC 16432 / NCIMB 13614 / HKI 0122) protein is Aspartate--tRNA(Asp/Asn) ligase.